We begin with the raw amino-acid sequence, 344 residues long: L-rhamnose-proton symporter (344 aa).

Transmembrane regions (helical) follow at residues 4 to 24 (AITMGIFWHLIGAASAACFYA), 38 to 58 (WSVGGIVSWLILPWAISATLL), 72 to 92 (TLLPVFLFGAMWGIGNINYGL), 101 to 121 (MGIGIAIGITLIVGTLMTPII), 131 to 151 (TQGGQMTLLGVLVAVIGVGIV), 175 to 195 (LLLAVMCGIFSAGMSFAMNAA), 214 to 234 (LPSYVVIMGGGALVNLGFCFI), 259 to 279 (LLLSALGGLMWYLQFFFYAWG), 290 to 310 (MSWMLHMSFYVLCGGLVGLVL), and 323 to 343 (VLSLGCVVIIIAANIVGLGMA).

It belongs to the L-rhamnose transporter (TC 2.A.7.6) family.

It localises to the cell inner membrane. The catalysed reaction is L-rhamnopyranose(in) + H(+)(in) = L-rhamnopyranose(out) + H(+)(out). Uptake of L-rhamnose across the cytoplasmic membrane with the concomitant transport of protons into the cell (symport system). The chain is L-rhamnose-proton symporter from Klebsiella pneumoniae (strain 342).